The primary structure comprises 295 residues: 4-hydroxy-tetrahydrodipicolinate synthase (295 aa).

Thr48 lines the pyruvate pocket. Tyr135 (proton donor/acceptor) is an active-site residue. The Schiff-base intermediate with substrate role is filled by Lys163. Val204 is a pyruvate binding site.

It belongs to the DapA family. Homotetramer; dimer of dimers.

Its subcellular location is the cytoplasm. The catalysed reaction is L-aspartate 4-semialdehyde + pyruvate = (2S,4S)-4-hydroxy-2,3,4,5-tetrahydrodipicolinate + H2O + H(+). It functions in the pathway amino-acid biosynthesis; L-lysine biosynthesis via DAP pathway; (S)-tetrahydrodipicolinate from L-aspartate: step 3/4. Catalyzes the condensation of (S)-aspartate-beta-semialdehyde [(S)-ASA] and pyruvate to 4-hydroxy-tetrahydrodipicolinate (HTPA). The polypeptide is 4-hydroxy-tetrahydrodipicolinate synthase (Francisella philomiragia subsp. philomiragia (strain ATCC 25017 / CCUG 19701 / FSC 153 / O#319-036)).